The chain runs to 344 residues: Anthranilate phosphoribosyltransferase (344 aa).

5-phospho-alpha-D-ribose 1-diphosphate is bound by residues Gly85, 88–89 (GD), Thr93, 95–98 (NIST), 113–121 (KHGNRSVSS), and Ser125. Gly85 contacts anthranilate. Ser97 is a Mg(2+) binding site. Asn116 contacts anthranilate. Position 171 (Arg171) interacts with anthranilate. 2 residues coordinate Mg(2+): Asp229 and Glu230.

It belongs to the anthranilate phosphoribosyltransferase family. As to quaternary structure, homodimer. The cofactor is Mg(2+).

The catalysed reaction is N-(5-phospho-beta-D-ribosyl)anthranilate + diphosphate = 5-phospho-alpha-D-ribose 1-diphosphate + anthranilate. Its pathway is amino-acid biosynthesis; L-tryptophan biosynthesis; L-tryptophan from chorismate: step 2/5. Functionally, catalyzes the transfer of the phosphoribosyl group of 5-phosphorylribose-1-pyrophosphate (PRPP) to anthranilate to yield N-(5'-phosphoribosyl)-anthranilate (PRA). This is Anthranilate phosphoribosyltransferase from Shewanella amazonensis (strain ATCC BAA-1098 / SB2B).